Reading from the N-terminus, the 333-residue chain is Viral cathepsin (333 aa).

Positions Met1–Ala20 are cleaved as a signal peptide. The propeptide at Leu21–Leu124 is activation peptide. 3 cysteine pairs are disulfide-bonded: Cys145/Cys186, Cys179/Cys219, and Cys272/Cys321. Residue Cys148 is part of the active site. The N-linked (GlcNAc...) asparagine; by host glycan is linked to Asn170. Active-site residues include His280 and Asn300.

It belongs to the peptidase C1 family. Synthesized as an inactive proenzyme and activated by proteolytic removal of the inhibitory propeptide.

It carries out the reaction Endopeptidase of broad specificity, hydrolyzing substrates of both cathepsin L and cathepsin B.. In terms of biological role, cysteine protease that plays an essential role in host liquefaction to facilitate horizontal transmission of the virus. May participate in the degradation of foreign protein expressed by the baculovirus system. This chain is Viral cathepsin (VCATH), found in Cydia pomonella granulosis virus (isolate Mexico/1963) (CpGV).